We begin with the raw amino-acid sequence, 210 residues long: Riboflavin kinase (210 aa).

The interval 1–81 is H-T-H motif-like; that stretch reads MECRERRLAA…DLLRYFNIAS (81 aa). Residues 82–210 form a riboflavin kinase region; that stretch reads IRLVGRVVSG…GDVVEVEVLL (129 aa). 91 to 96 lines the CDP pocket; sequence GLGEGA. Mg(2+) contacts are provided by Thr-120 and Asn-122. FMN-binding residues include Thr-177 and Glu-185. 190 to 193 is a binding site for CDP; that stretch reads VKLR.

It belongs to the archaeal riboflavin kinase family. It depends on Mg(2+) as a cofactor.

It carries out the reaction riboflavin + CTP = CDP + FMN + H(+). It functions in the pathway cofactor biosynthesis; FMN biosynthesis; FMN from riboflavin (CTP route): step 1/1. Catalyzes the CTP-dependent phosphorylation of riboflavin (vitamin B2) to form flavin mononucleotide (FMN). The polypeptide is Riboflavin kinase (ribK) (Pyrobaculum arsenaticum (strain DSM 13514 / JCM 11321 / PZ6)).